A 490-amino-acid polypeptide reads, in one-letter code: Glutathione hydrolase 6 (490 aa).

Residues 1–52 (MEPEAGPVLYQKLRVWEPSLESEEEEEEISEQLILDASGPHDSSGNKAGRLP) are Cytoplasmic-facing. A helical; Signal-anchor for type II membrane protein transmembrane segment spans residues 53 to 73 (GAWAQLVAALLLLAIGFSLAV). Over 74-490 (RQLCSSGASP…PSGCCPFQGF (417 aa)) the chain is Extracellular. Asn-160, Asn-165, and Asn-374 each carry an N-linked (GlcNAc...) asparagine glycan.

The protein belongs to the gamma-glutamyltransferase family. As to quaternary structure, heterodimer composed of the light and heavy chains. The active site is located in the light chain. Cleaved by autocatalysis into a large and a small subunit and the autocatalytic cleavage is essential to the functional activation of the enzyme.

Its subcellular location is the membrane. The enzyme catalyses an N-terminal (5-L-glutamyl)-[peptide] + an alpha-amino acid = 5-L-glutamyl amino acid + an N-terminal L-alpha-aminoacyl-[peptide]. It catalyses the reaction glutathione + H2O = L-cysteinylglycine + L-glutamate. It carries out the reaction an S-substituted glutathione + H2O = an S-substituted L-cysteinylglycine + L-glutamate. Its pathway is sulfur metabolism; glutathione metabolism. Its function is as follows. Hydrolyzes and transfers gamma-glutamyl moieties from glutathione and other gamma-glutamyl compounds to acceptors. This is Glutathione hydrolase 6 from Bos taurus (Bovine).